Here is a 91-residue protein sequence, read N- to C-terminus: UPF0358 protein Sca_0738 (91 aa).

This sequence belongs to the UPF0358 family.

The protein is UPF0358 protein Sca_0738 of Staphylococcus carnosus (strain TM300).